Consider the following 107-residue polypeptide: Small ribosomal subunit protein bS16m (107 aa).

Belongs to the bacterial ribosomal protein bS16 family. As to quaternary structure, component of the mitochondrial small ribosomal subunit (mt-SSU). Mature N.crassa 74S mitochondrial ribosomes consist of a small (37S) and a large (54S) subunit. The 37S small subunit contains a 16S ribosomal RNA (16S mt-rRNA) and 32 different proteins. The 54S large subunit contains a 23S rRNA (23S mt-rRNA) and 42 different proteins.

It is found in the mitochondrion. Its function is as follows. Component of the mitochondrial ribosome (mitoribosome), a dedicated translation machinery responsible for the synthesis of mitochondrial genome-encoded proteins, including at least some of the essential transmembrane subunits of the mitochondrial respiratory chain. The mitoribosomes are attached to the mitochondrial inner membrane and translation products are cotranslationally integrated into the membrane. The sequence is that of Small ribosomal subunit protein bS16m (cyt-21) from Neurospora crassa (strain ATCC 24698 / 74-OR23-1A / CBS 708.71 / DSM 1257 / FGSC 987).